We begin with the raw amino-acid sequence, 195 residues long: ATP-dependent Clp protease proteolytic subunit (195 aa).

Residue Ser101 is the Nucleophile of the active site. The active site involves His126.

Belongs to the peptidase S14 family.

It is found in the plastid. Its subcellular location is the chloroplast stroma. The enzyme catalyses Hydrolysis of proteins to small peptides in the presence of ATP and magnesium. alpha-casein is the usual test substrate. In the absence of ATP, only oligopeptides shorter than five residues are hydrolyzed (such as succinyl-Leu-Tyr-|-NHMec, and Leu-Tyr-Leu-|-Tyr-Trp, in which cleavage of the -Tyr-|-Leu- and -Tyr-|-Trp bonds also occurs).. Cleaves peptides in various proteins in a process that requires ATP hydrolysis. Has a chymotrypsin-like activity. Plays a major role in the degradation of misfolded proteins. The polypeptide is ATP-dependent Clp protease proteolytic subunit (Bigelowiella natans (Pedinomonas minutissima)).